The sequence spans 324 residues: Porphobilinogen deaminase (324 aa).

Cysteine 246 carries the S-(dipyrrolylmethanemethyl)cysteine modification. Residues 261-279 (GQAPEEGGRAAASQAPAAL) form an insert region.

It belongs to the HMBS family. As to quaternary structure, monomer. Requires dipyrromethane as cofactor.

It carries out the reaction 4 porphobilinogen + H2O = hydroxymethylbilane + 4 NH4(+). It functions in the pathway porphyrin-containing compound metabolism; protoporphyrin-IX biosynthesis; coproporphyrinogen-III from 5-aminolevulinate: step 2/4. In terms of biological role, tetrapolymerization of the monopyrrole PBG into the hydroxymethylbilane pre-uroporphyrinogen in several discrete steps. This Paenibacillus macerans (Bacillus macerans) protein is Porphobilinogen deaminase (hemC).